Reading from the N-terminus, the 1404-residue chain is MKDLLNLFNQQRQTLDFDAIKIALASPDLIRSWSYGEVKKPETINYRTFKPERDGLFCAAIFGPIKDYECLCGKYKRMKHRGVVCEKCGTEVTLAKVRRERMGHIDLASPVAHIWFLKSLPSRIGLMLDMTLRDIERVLYFEAYVVTEPGLTPLERRQLLTEEQYLTARQEYNDDFDAAMGAEAVYELLRTIDLQSEMTRLREEIASTGSETKLKRLTKRIKLIEAFLESGNRPEWMVMTVLPVLPPDLRPLVPLDGGRFATSDLNDLYRRVINRNNRLRRLLELNAPDIIVRNEKRMLQESVDALLDNGRRGRAITGTNKRPLKSLADMIKGKQGRFRQNLLGKRVDYSGRSVITVGPYLKLHQCGLPKKMALELFKPFVFAKLQRRGLATTIKAAKKLVEREEAEVWDILEEVIREHPVLLNRAPTLHRLGIQAFEPVLIEGKAIQLHPLVCTAFNADFDGDQMAVHVPLSLEAQLEARALMMSTNNILSPANGEPIIVPSQDVVLGLYYMSRALENKKGEGMVFANTSEVKRAYDNRVVELHAKVKVRITQVDVEAGGKRSSGTSIVDTTVGRALLSEILPEGLPFQLANTEMTKKNISRLINSSYRLLGLKDTVVFADKLMYTGYAYATRAGVSIGIDDMLIPDEKKGILTEAEAEVLEIQEQYQSGLVTAGERYNKVVDIWSRTSERIAKAMMDTIGTEKVENAKGETIDQKSMNSLYIMADSGARGSQAQIRQLAGMRGLMARPDGSIIETPIKANFREGLNVQEYFNSTHGARKGLADTALKTANSGYLTRRLVDVAQDVVITEIDCGTTEGLIMTPIVEGGDVVEPLRERVLGRVVAEDVYLPGNDEEPIVTRNTLLDEAWVAKLEDASVQSVKVRSTISCESSFGVCARCYGRDLARGHQVNIGEAVGVIAAQSIGEPGTQLTMRTFHIGGAASRAAAVDNITVKTTGSVKFNNLKSVAHASGSLVAVSRSGELSVLDGHGRERERYKLPYGATITAKDGDAVKAGQSVANWDPHNHPIVSEVAGFIRFIDFVDGVTVIEKTDELTGLASREITDPKRRGAQAKELRPIVRIVDAKGNDLTIPNTDLPAQYLLPPRSIVNLQDGAAVGVGDVVAKIPQEASKTRDITGGLPRVADLFEARKPKDPAILAERSGIISFGKDTKGKQRLIIKDTDGSEHEELIPKYRQIIVFEGEHVTKGETVVDGEPSPQDILRLLGVEPLAAYLVKEIQDVYRLQGVKINDKHIEVITRQMLRKVEIVDQGNSKFLNGEQVERQRVIEENARLVKRNELPAKYDPVLLGITKASLATESFISAASFQETTRVLTEAAVRGTRDNLRGLKENVIVGRLIPAGTGLAYHAGRRKASGLTDSEMETLSGKPAVAEPVAAVADAGADEE.

Cysteine 70, cysteine 72, cysteine 85, and cysteine 88 together coordinate Zn(2+). Mg(2+) contacts are provided by aspartate 460, aspartate 462, and aspartate 464. Zn(2+) is bound by residues cysteine 814, cysteine 889, cysteine 896, and cysteine 899.

Belongs to the RNA polymerase beta' chain family. In terms of assembly, the RNAP catalytic core consists of 2 alpha, 1 beta, 1 beta' and 1 omega subunit. When a sigma factor is associated with the core the holoenzyme is formed, which can initiate transcription. Mg(2+) serves as cofactor. Zn(2+) is required as a cofactor.

The enzyme catalyses RNA(n) + a ribonucleoside 5'-triphosphate = RNA(n+1) + diphosphate. In terms of biological role, DNA-dependent RNA polymerase catalyzes the transcription of DNA into RNA using the four ribonucleoside triphosphates as substrates. In Xanthomonas axonopodis pv. citri (strain 306), this protein is DNA-directed RNA polymerase subunit beta'.